The primary structure comprises 324 residues: Mevalonate kinase (324 aa).

103-113 (PPRAGLGSSAA) is a binding site for ATP. Residue Asp-154 is the Proton acceptor of the active site.

This sequence belongs to the GHMP kinase family. Mevalonate kinase subfamily. In terms of assembly, homodimer. Requires Mg(2+) as cofactor.

Its subcellular location is the cytoplasm. The catalysed reaction is (R)-mevalonate + ATP = (R)-5-phosphomevalonate + ADP + H(+). The protein operates within isoprenoid biosynthesis; isopentenyl diphosphate biosynthesis via mevalonate pathway; isopentenyl diphosphate from (R)-mevalonate: step 1/3. Functionally, catalyzes the phosphorylation of (R)-mevalonate (MVA) to (R)-mevalonate 5-phosphate (MVAP). Functions in the mevalonate (MVA) pathway leading to isopentenyl diphosphate (IPP), a key precursor for the biosynthesis of isoprenoid compounds such as archaeal membrane lipids. This Aeropyrum pernix (strain ATCC 700893 / DSM 11879 / JCM 9820 / NBRC 100138 / K1) protein is Mevalonate kinase.